A 385-amino-acid polypeptide reads, in one-letter code: Cytochrome b (385 aa).

Over 1-27 the chain is Mitochondrial matrix; that stretch reads MRLLKSHPLLKLVNSYLIDASQPSNIS. Tyrosine 16 provides a ligand contact to a ubiquinone. The helical transmembrane segment at 28 to 51 threads the bilayer; it reads YLWNFGSLLACCLIIQIVTGVTLA. Topologically, residues 52–74 are mitochondrial intermembrane; the sequence is MHYSPNVLEAFNSIEHIMRDVNN. A helical transmembrane segment spans residues 75-102; that stretch reads GWLVRYLHSNTASAFFFLVYLHIGRGMY. Positions 82 and 96 each coordinate heme b. Over 103-110 the chain is Mitochondrial matrix; sequence YGSYRAPR. Residues 111 to 135 traverse the membrane as a helical segment; that stretch reads TLVWAIGTVILILMMATAFLGYVLP. Topologically, residues 136 to 172 are mitochondrial intermembrane; sequence YGQMSLWGATVITNLISAIPWIGQDIVEFIWGGFSVN. A helical transmembrane segment spans residues 173–205; it reads NATLNRFFALHFVLPFILAALVLMHLIALHDTA. Heme b is bound by residues histidine 183 and histidine 197. Histidine 202 is an a ubiquinone binding site. The Mitochondrial matrix segment spans residues 206–224; sequence GSSNPLGVSGNYDRITFAP. The chain crosses the membrane as a helical span at residues 225 to 247; the sequence is YYLFKDLITIFIFIYVLSSFVFF. At 248 to 288 the chain is on the mitochondrial intermembrane side; it reads MPNVLGDSENYIMANPMQTPPAIVPEWYLLPFYAILRSIPN. The helical transmembrane segment at 289–309 threads the bilayer; it reads KLLGVIAMFSAILAIMLLPIT. Over 310–320 the chain is Mitochondrial matrix; that stretch reads DLGRSKGLQFR. Residues 321-341 traverse the membrane as a helical segment; that stretch reads PLSKFAFWAFVVNFLILMKLG. Over 342–348 the chain is Mitochondrial intermembrane; that stretch reads ACHVESP. Residues 349–365 traverse the membrane as a helical segment; the sequence is FIELGQFSTIFYFSYFI. Residues 366 to 385 lie on the Mitochondrial matrix side of the membrane; sequence FIVPVLSLIENTLVDLNYLK.

Belongs to the cytochrome b family. In terms of assembly, component of the ubiquinol-cytochrome c oxidoreductase (cytochrome b-c1 complex, complex III, CIII), a multisubunit enzyme composed of 10 subunits. The complex is composed of 3 respiratory subunits cytochrome b (cob), cytochrome c1 (cyt-1) and Rieske protein (fes-1), 2 core protein subunits pep and ucr-1, and 5 low-molecular weight protein subunits qcr6, qcr7, qcr8, qcr9 and probably NCU16844/qcr10. The complex exists as an obligatory dimer and forms supercomplexes (SCs) in the inner mitochondrial membrane with NADH-ubiquinone oxidoreductase (complex I, CI) and cytochrome c oxidase (complex IV, CIV), resulting in different assemblies (supercomplexes SCI(1)III(2), SCIII(2)IV(1) and SCIII(2)IV(2) as well as higher order I(x)III(y)IV(z) megacomplexes). It depends on heme b as a cofactor.

It localises to the mitochondrion inner membrane. It catalyses the reaction a quinol + 2 Fe(III)-[cytochrome c](out) = a quinone + 2 Fe(II)-[cytochrome c](out) + 2 H(+)(out). In terms of biological role, component of the ubiquinol-cytochrome c oxidoreductase, a multisubunit transmembrane complex that is part of the mitochondrial electron transport chain which drives oxidative phosphorylation. The respiratory chain contains 3 multisubunit complexes succinate dehydrogenase (complex II, CII), ubiquinol-cytochrome c oxidoreductase (cytochrome b-c1 complex, complex III, CIII) and cytochrome c oxidase (complex IV, CIV), that cooperate to transfer electrons derived from NADH and succinate to molecular oxygen, creating an electrochemical gradient over the inner membrane that drives transmembrane transport and the ATP synthase. The cytochrome b-c1 complex catalyzes electron transfer from ubiquinol to cytochrome c, linking this redox reaction to translocation of protons across the mitochondrial inner membrane, with protons being carried across the membrane as hydrogens on the quinol. In the process called Q cycle, 2 protons are consumed from the matrix, 4 protons are released into the intermembrane space and 2 electrons are passed to cytochrome c. Cytochrome b is a catalytic core subunit containing 2 b-type hemes BL and BH topographically segregated in the quinone reduction (Qi) and quinol oxidation (Q0) sites on opposite sides of the membrane. The chain is Cytochrome b (cob) from Neurospora crassa (strain ATCC 24698 / 74-OR23-1A / CBS 708.71 / DSM 1257 / FGSC 987).